Consider the following 962-residue polypeptide: Exportin-T (962 aa).

M1 is subject to N-acetylmethionine. K634 is modified (N6-acetyllysine).

Found in a complex with XPOT, Ran and tRNA. Probably found in a complex with nucleoporins. Interacts with Ran and tRNA in a GTP-dependent manner.

Its subcellular location is the nucleus. It localises to the cytoplasm. Mediates the nuclear export of aminoacylated tRNAs. In the nucleus binds to tRNA and to the GTPase Ran in its active GTP-bound form. Docking of this trimeric complex to the nuclear pore complex (NPC) is mediated through binding to nucleoporins. Upon transit of a nuclear export complex into the cytoplasm, disassembling of the complex and hydrolysis of Ran-GTP to Ran-GDP (induced by RANBP1 and RANGAP1, respectively) cause release of the tRNA from the export receptor. XPOT then return to the nuclear compartment and mediate another round of transport. The directionality of nuclear export is thought to be conferred by an asymmetric distribution of the GTP- and GDP-bound forms of Ran between the cytoplasm and nucleus. The polypeptide is Exportin-T (XPOT) (Pongo abelii (Sumatran orangutan)).